A 280-amino-acid polypeptide reads, in one-letter code: Late embryogenesis abundant protein 76 (280 aa).

Disordered stretches follow at residues 1–156 (MASN…GEAV) and 220–241 (EEED…TDPT). Positions 28–39 (MRDKAEEGKDKT) are enriched in basic and acidic residues. LEA 11-mer repeat repeat units lie at residues 31-41 (KAEEGKDKTSQ), 53-63 (TAQAAKDKTSQ), 75-85 (TAQAAKDKTSQ), 97-107 (TAQAAKDKTSQ), and 119-129 (TTQSSKEKTSQ). A compositionally biased stretch (low complexity) spans 40–114 (SQTAQKAQQK…TSQAAQTTQQ (75 aa)). Composition is skewed to basic and acidic residues over residues 115-127 (KAHE…KEKT) and 136-145 (EKARETKDKT). The segment covering 230-239 (TTTCTTQSTD) has biased composition (low complexity).

Belongs to the LEA type 4 family.

Functionally, lea proteins are late embryonic proteins abundant in higher plant seed embryos. The sequence is that of Late embryogenesis abundant protein 76 from Brassica napus (Rape).